Consider the following 367-residue polypeptide: CCN family member 4 (367 aa).

The first 22 residues, 1–22 (MRWLLPWTLAAVAVLRVGNILA), serve as a signal peptide directing secretion. The IGFBP N-terminal domain maps to 45-118 (RPEFCKWPCE…RYAIGVCAQV (74 aa)). Disulfide bonds link cysteine 49/cysteine 73, cysteine 53/cysteine 75, cysteine 55/cysteine 76, and cysteine 62/cysteine 79. A glycan (N-linked (GlcNAc...) asparagine) is linked at asparagine 86. Disulfide bonds link cysteine 87/cysteine 101 and cysteine 93/cysteine 115. The VWFC domain maps to 121 to 186 (VGCVLDGVRY…GQCCEQWVCD (66 aa)). Residue asparagine 143 is glycosylated (N-linked (GlcNAc...) asparagine). The TSP type-1 domain occupies 215–260 (NCIAYTSPWSPCSTTCGLGISTRISNVNARCWPEQESRLCNLRPCD). 5 cysteine pairs are disulfide-bonded: cysteine 273–cysteine 310, cysteine 290–cysteine 324, cysteine 301–cysteine 340, cysteine 304–cysteine 342, and cysteine 309–cysteine 346. Residues 273 to 347 (CLAVYQPEEA…NACFCNLSCR (75 aa)) form the CTCK domain. N-linked (GlcNAc...) asparagine glycosylation occurs at asparagine 284. N-linked (GlcNAc...) asparagine glycosylation is present at asparagine 343.

The protein belongs to the CCN family. Highly expressed in kidney and lung. Lower levels in heart, brain, spleen, liver, skeletal muscle and testis. Expressed in low metastatic melanoma cells.

The protein resides in the secreted. Functionally, downstream regulator in the Wnt/Frizzled-signaling pathway. Associated with cell survival. Adheres to skin and melanoma fibroblasts. In vitro binding to skin fibroblasts occurs through the proteoglycans, decorin and biglycan. Suppresses tumor growth in vivo. The protein is CCN family member 4 (Ccn4) of Mus musculus (Mouse).